Here is a 499-residue protein sequence, read N- to C-terminus: Putative antiporter subunit mnhD2 (499 aa).

The next 14 membrane-spanning stretches (helical) occupy residues 3–23 (SNLL…LVFT), 32–52 (ILYI…LIYV), 78–98 (LSLV…SYGF), 108–128 (YYLP…FLTS), 130–150 (LFNL…LVTL), 161–181 (IIYV…IGLL), 206–226 (IIII…LVLF), 240–260 (LAAL…IRFF), 273–293 (PLLV…VIAY), 308–328 (IGFV…GAIF), 330–350 (LAND…LVYM), 368–388 (FFGV…PFSG), 403–423 (GNFI…YSLF), and 450–470 (TILG…PVVM).

It belongs to the CPA3 antiporters (TC 2.A.63) subunit D family. May form a heterooligomeric complex that consists of seven subunits: mnhA2, mnhB2, mnhC2, mnhD2, mnhE2, mnhF2 and mnhG2.

Its subcellular location is the cell membrane. This is Putative antiporter subunit mnhD2 (mnhD2) from Staphylococcus haemolyticus (strain JCSC1435).